A 410-amino-acid chain; its full sequence is Acyl-CoA-binding domain-containing protein 5-B (410 aa).

Residues 12-101 (AQKRFEAAVK…IQLIIETLPV (90 aa)) enclose the ACB domain. An acyl-CoA contacts are provided by residues 23–32 (IRSLPEDGSY), 43–47 (YSYYK), Lys69, and Tyr88. Residues 119–128 (VEDDDDDDDE) are compositionally biased toward acidic residues. 3 disordered regions span residues 119–165 (VEDD…LDDY), 221–242 (SDDE…GSGV), and 254–320 (GANM…DRMD). Residues 326 to 355 (TQITTILSELEDNMQDVLRRLTTLEQLTAS) adopt a coiled-coil conformation. At 382-404 (SPFTAVLTVLWPFAVHWLVQFYL) the chain is embedded in the membrane.

The protein localises to the membrane. Its function is as follows. Binds medium- and long-chain acyl-CoA esters. The sequence is that of Acyl-CoA-binding domain-containing protein 5-B (acbd5b) from Danio rerio (Zebrafish).